A 467-amino-acid chain; its full sequence is Cysteine--tRNA ligase (467 aa).

Zn(2+) is bound at residue Cys-28. The short motif at 30-40 is the 'HIGH' region element; that stretch reads MTVYDHCHLGH. Zn(2+) contacts are provided by Cys-209, His-234, and Glu-238. Positions 266–270 match the 'KMSKS' region motif; sequence KMSKS. Lys-269 is a binding site for ATP.

The protein belongs to the class-I aminoacyl-tRNA synthetase family. As to quaternary structure, monomer. Requires Zn(2+) as cofactor.

The protein resides in the cytoplasm. It carries out the reaction tRNA(Cys) + L-cysteine + ATP = L-cysteinyl-tRNA(Cys) + AMP + diphosphate. This Nitrosomonas eutropha (strain DSM 101675 / C91 / Nm57) protein is Cysteine--tRNA ligase.